Reading from the N-terminus, the 204-residue chain is MRPLTPRQAEILDLIKNNIAETGMPPTRAEIANRLGFKSANAAEEHLKALAKKGFIEIMPGTSRGIRLPQEEQVETGLPLIGQVAAGEPILAQEHVEQYYQVDPNMFKPAADFLLRVRGDSMKNIGILEGDLLAVHKMQQARNGQVVVARVDDDVTVKRFEQKGNVIYLHAENEDYNPIKVDLSCQSLTIEGLAVGVIRNGDWL.

Positions Arg-28 to Lys-48 form a DNA-binding region, H-T-H motif. Active-site for autocatalytic cleavage activity residues include Ser-121 and Lys-158.

Belongs to the peptidase S24 family. In terms of assembly, homodimer.

It carries out the reaction Hydrolysis of Ala-|-Gly bond in repressor LexA.. Its function is as follows. Represses a number of genes involved in the response to DNA damage (SOS response), including recA and lexA. In the presence of single-stranded DNA, RecA interacts with LexA causing an autocatalytic cleavage which disrupts the DNA-binding part of LexA, leading to derepression of the SOS regulon and eventually DNA repair. The chain is LexA repressor from Shewanella frigidimarina (strain NCIMB 400).